A 238-amino-acid chain; its full sequence is ATP synthase subunit a (238 aa).

5 helical membrane passes run 17–37, 75–95, 112–132, 172–192, and 194–214; these read LSNI…AIIC, FHVL…LGLP, DPIV…YYGI, YGNI…LAHI, and IFVG…SLFI.

The protein belongs to the ATPase A chain family. In terms of assembly, F-type ATPases have 2 components, CF(1) - the catalytic core - and CF(0) - the membrane proton channel. CF(1) has five subunits: alpha(3), beta(3), gamma(1), delta(1), epsilon(1). CF(0) has three main subunits: a(1), b(2) and c(9-12). The alpha and beta chains form an alternating ring which encloses part of the gamma chain. CF(1) is attached to CF(0) by a central stalk formed by the gamma and epsilon chains, while a peripheral stalk is formed by the delta and b chains.

It is found in the cell membrane. In terms of biological role, key component of the proton channel; it plays a direct role in the translocation of protons across the membrane. The polypeptide is ATP synthase subunit a (Listeria monocytogenes serovar 1/2a (strain ATCC BAA-679 / EGD-e)).